We begin with the raw amino-acid sequence, 678 residues long: ABC transporter F family member 2 (678 aa).

2 ABC transporter domains span residues 84 to 342 (VRLE…EAQY) and 411 to 626 (VTVK…AREL). ATP-binding positions include 116–123 (GVNGAGKT) and 443–450 (GPNGCGKS). The tract at residues 630-678 (AELEEKAPKVKAKSKMSKAEREARKKQKMKAFQASKKKSKSSKNAKRWN) is disordered. The span at 653-678 (RKKQKMKAFQASKKKSKSSKNAKRWN) shows a compositional bias: basic residues.

The protein belongs to the ABC transporter superfamily. ABCF family. EF3 (TC 3.A.1.121) subfamily.

This chain is ABC transporter F family member 2 (ABCF2), found in Arabidopsis thaliana (Mouse-ear cress).